The primary structure comprises 577 residues: Optineurin (577 aa).

2 disordered regions span residues 1-32 (MSHQPLSCLTEKEDSPSESTGNGPPHLAHPNL) and 101-143 (SHEN…KDQL). Residues 38-170 (EELLQQMKEL…VSELQLKLNS (133 aa)) adopt a coiled-coil conformation. An interaction with Rab8 region spans residues 58–209 (MKLNNQAMKG…GPTRTVSTGT (152 aa)). The short motif at 176-181 (DSFVEI) is the LIR element. Serine 177 carries the phosphoserine; by TBK1 modification. The segment covering 186 to 197 (GEAEGSVKEIKH) has biased composition (basic and acidic residues). 2 disordered regions span residues 186–209 (GEAEGSVKEIKHSPGPTRTVSTGT) and 261–297 (VSDFEKKTSNRSEIETQTEGSTEKENDEEKGPETVGS). A Phosphoserine modification is found at serine 198. The stretch at 239 to 508 (CLREGNQKVE…LLKENDAFED (270 aa)) forms a coiled coil. Basic and acidic residues-rich tracts occupy residues 261 to 274 (VSDFEKKTSNRSEI) and 281 to 292 (STEKENDEEKGP). Serine 342 is subject to Phosphoserine. Positions 411-577 (TRKESEKVDR…LQIHVMDCII (167 aa)) are interaction with HD. The tract at residues 412 to 520 (RKESEKVDRA…RQSLMEMQSR (109 aa)) is interaction with MYO6. The UBAN motif lies at 474–479 (DFHAER). Phosphoserine is present on serine 526. The segment at 547 to 577 (QRNIPIHSCPKCGEVLPDIDTLQIHVMDCII) adopts a CCHC NOA-type zinc-finger fold. Residues cysteine 555, cysteine 558, histidine 571, and cysteine 575 each coordinate Zn(2+).

As to quaternary structure, self-associates. Interacts with HD. Interacts with GTF3A. Interacts with MYO6. Interacts (via UBAN) with ubiquitinated TFRC. Interacts with GTP-bound Rab8 (RAB8A and/or RAB8B). Interacts with TBC1D17. Interacts with TBK1. Interacts with TRAF3. Binds to linear ubiquitin chains. Interacts with LC3 family members MAP1LC3A, MAP1LC3B, GABARAP, GABARAPL1 and GABARAPL2; OPTN phosphorylation increases the association (at least with MAP1LC3B). Interacts with RAB12; the interaction may be indirect. Interacts with TBK1; this interaction leads to the Golgi localization of TBK1 and its subsequent activation. Interacts with palmitoyltransferase ZDHHC17/HIP14; the interaction does not lead to palmitoylation of OPTN. Interacts with CYLD. Interacts with TOM1; the interaction is indirect and is mediated by MYO6, which acts as a bridge between TOM1 and OPTN. Interacts with USP12; the interaction is independent of USP12 deubiquitinase activity and may be involved in regulation of autophagic flux. In terms of assembly, (Microbial infection) Interacts with E3 14.7 kDa protein of group C human adenovirus. Interacts with Bluetongue virus protein NS3. Phosphorylated by TBK1, leading to restrict bacterial proliferation in case of infection. Phosphorylation is induced by phorbol esters and decreases its half-time. As to expression, present in aqueous humor of the eye (at protein level). Expressed in the trabecular meshwork (at protein level). Expressed in nonpigmented ciliary epithelium (at protein level). Expressed at high levels in skeletal muscle, also detected in heart, brain, pancreas, kidney, placenta and liver. Expressed in dermal fibroblasts (at protein level).

It is found in the cytoplasm. Its subcellular location is the perinuclear region. It localises to the golgi apparatus. The protein resides in the trans-Golgi network. The protein localises to the cytoplasmic vesicle. It is found in the autophagosome. Its subcellular location is the recycling endosome. Its function is as follows. Plays an important role in the maintenance of the Golgi complex, in membrane trafficking, in exocytosis, through its interaction with myosin VI and Rab8. Links myosin VI to the Golgi complex and plays an important role in Golgi ribbon formation. Plays a role in the activation of innate immune response during viral infection. Mechanistically, recruits TBK1 at the Golgi apparatus, promoting its trans-phosphorylation after RLR or TLR3 stimulation. In turn, activated TBK1 phosphorylates its downstream partner IRF3 to produce IFN-beta/IFNB1. Plays a neuroprotective role in the eye and optic nerve. May act by regulating membrane trafficking and cellular morphogenesis via a complex that contains Rab8 and huntingtin (HD). Mediates the interaction of Rab8 with the probable GTPase-activating protein TBC1D17 during Rab8-mediated endocytic trafficking, such as that of transferrin receptor (TFRC/TfR); regulates Rab8 recruitment to tubules emanating from the endocytic recycling compartment. Autophagy receptor that interacts directly with both the cargo to become degraded and an autophagy modifier of the MAP1 LC3 family; targets ubiquitin-coated bacteria (xenophagy), such as cytoplasmic Salmonella enterica, and appears to function in the same pathway as SQSTM1 and CALCOCO2/NDP52. In terms of biological role, (Microbial infection) May constitute a cellular target for various viruses, such as adenovirus E3 14.7 or Bluetongue virus, to inhibit innate immune response. During RNA virus infection, such as that of Sendai virus, negatively regulates the induction of IFNB1. The chain is Optineurin (OPTN) from Homo sapiens (Human).